Consider the following 112-residue polypeptide: cAMP-regulated phosphoprotein 19 (112 aa).

Residue methionine 1 is modified to N-acetylmethionine. The span at 1–11 (MSAEVPEAASA) shows a compositional bias: low complexity. The interval 1-49 (MSAEVPEAASAEEQKEMEDKVTSPEKAEEAKLKARYPHLGQKPGGSDFL) is disordered. Residue serine 2 is modified to N-acetylserine. Residues serine 2 and serine 23 each carry the phosphoserine modification. Positions 12–32 (EEQKEMEDKVTSPEKAEEAKL) are enriched in basic and acidic residues. Serine 62 and serine 104 each carry phosphoserine; by GWL. Positions 74 to 112 (NKQLPAAAPDKTEVTGDHIPTPQDLPQRKPSLVASKLAG) are disordered. Serine 104 is modified (phosphoserine; by PKA). Lysine 109 is subject to N6-acetyllysine.

The protein belongs to the endosulfine family. As to quaternary structure, interacts (when phosphorylated at Ser-62) with PPP2R2D. Interacts with SNCA. Interacts with PPP2R2A; the interaction is direct and this interaction inhibits PP2A activity. Post-translationally, phosphorylation at Ser-62 by MASTL/GWL during mitosis is essential for interaction with PPP2R2D (PR55-delta) and subsequent inactivation of PP2A. Phosphorylated by PKA.

It is found in the cytoplasm. Protein phosphatase inhibitor that specifically inhibits protein phosphatase 2A (PP2A) during mitosis. Inhibition of PP2A is enhanced when ARPP19 is phosphorylated. When phosphorylated at Ser-62 during mitosis, specifically interacts with PPP2R2D (PR55-delta) and inhibits its activity, leading to inactivation of PP2A, an essential condition to keep cyclin-B1-CDK1 activity high during M phase. May indirectly enhance GAP-43 expression by binding to the NGF-regulatory region of its mRNA. This is cAMP-regulated phosphoprotein 19 (Arpp19) from Mus musculus (Mouse).